The primary structure comprises 661 residues: Probable urea active transporter 3 (661 aa).

The next 15 helical transmembrane spans lie at 13–33 (GIVI…TYVL), 56–76 (GLIS…LTSA), 86–106 (GSMW…VIAL), 132–152 (AVFL…LLLG), 165–185 (VVAA…SGGL), 197–217 (VIVY…SVHI), 251–271 (AVFV…CDPS), 288–308 (YFAG…AAAL), 352–372 (AGVL…LVAF), 397–417 (VTHV…VLFN), 419–439 (IGIT…PAVF), 454–474 (GMII…VGSC), 495–515 (VGNF…SYFF), 556–576 (IGIF…PLPM), and 591–611 (WIIV…FYPL).

Belongs to the sodium:solute symporter (SSF) (TC 2.A.21) family.

Its subcellular location is the membrane. It localises to the golgi apparatus membrane. Its function is as follows. Involved in active transport of urea. This chain is Probable urea active transporter 3 (dur3-3), found in Schizosaccharomyces pombe (strain 972 / ATCC 24843) (Fission yeast).